The following is a 317-amino-acid chain: Putative GTPase PH0274 (317 aa).

GTP is bound by residues 54–62 (GPPGAGKST), aspartate 196, and 231–233 (VGT).

The protein belongs to the SIMIBI class G3E GTPase family. ArgK/MeaB subfamily.

In terms of biological role, may have GTPase activity. May also bind and hydrolyze ATP. May function as chaperone. This is Putative GTPase PH0274 from Pyrococcus horikoshii (strain ATCC 700860 / DSM 12428 / JCM 9974 / NBRC 100139 / OT-3).